Here is a 367-residue protein sequence, read N- to C-terminus: Peptide chain release factor 2 (367 aa).

Residue Gln254 is modified to N5-methylglutamine.

This sequence belongs to the prokaryotic/mitochondrial release factor family. Post-translationally, methylated by PrmC. Methylation increases the termination efficiency of RF2.

The protein resides in the cytoplasm. Functionally, peptide chain release factor 2 directs the termination of translation in response to the peptide chain termination codons UGA and UAA. This chain is Peptide chain release factor 2, found in Burkholderia mallei (strain ATCC 23344).